The following is a 555-amino-acid chain: Suppressor of tumorigenicity 7 protein-like (555 aa).

Transmembrane regions (helical) follow at residues 36–56 and 80–100; these read GLAG…LYAL and FYVA…IFEW. Positions 126–148 are disordered; the sequence is TESSISEPGSPSNNRESETSRQN.

Belongs to the ST7 family.

The protein localises to the membrane. This chain is Suppressor of tumorigenicity 7 protein-like (ST7L), found in Bos taurus (Bovine).